Here is a 353-residue protein sequence, read N- to C-terminus: Nicotinate-nucleotide--dimethylbenzimidazole phosphoribosyltransferase (353 aa).

E319 functions as the Proton acceptor in the catalytic mechanism.

The protein belongs to the CobT family.

The catalysed reaction is 5,6-dimethylbenzimidazole + nicotinate beta-D-ribonucleotide = alpha-ribazole 5'-phosphate + nicotinate + H(+). Its pathway is nucleoside biosynthesis; alpha-ribazole biosynthesis; alpha-ribazole from 5,6-dimethylbenzimidazole: step 1/2. In terms of biological role, catalyzes the synthesis of alpha-ribazole-5'-phosphate from nicotinate mononucleotide (NAMN) and 5,6-dimethylbenzimidazole (DMB). The chain is Nicotinate-nucleotide--dimethylbenzimidazole phosphoribosyltransferase from Chlorobaculum parvum (strain DSM 263 / NCIMB 8327) (Chlorobium vibrioforme subsp. thiosulfatophilum).